We begin with the raw amino-acid sequence, 396 residues long: GTPase Obg (396 aa).

The 159-residue stretch at 1–159 (MKFVDEATIY…RNIRLELKVL (159 aa)) folds into the Obg domain. An OBG-type G domain is found at 160–333 (ADVGLLGLPN…LCQDIMTWIE (174 aa)). Residues 166-173 (GLPNAGKS), 191-195 (FTTLV), 213-216 (DIPG), 283-286 (NKTD), and 314-316 (SAL) each bind GTP. Mg(2+) contacts are provided by Ser-173 and Thr-193. Disordered stretches follow at residues 337–356 (EEER…REQM) and 373–396 (LARK…FYAP). Basic and acidic residues predominate over residues 347–356 (EADRLNREQM). Acidic residues predominate over residues 381-396 (SDDDDDDEDVEVFYAP).

The protein belongs to the TRAFAC class OBG-HflX-like GTPase superfamily. OBG GTPase family. In terms of assembly, monomer. The cofactor is Mg(2+).

It localises to the cytoplasm. In terms of biological role, an essential GTPase which binds GTP, GDP and possibly (p)ppGpp with moderate affinity, with high nucleotide exchange rates and a fairly low GTP hydrolysis rate. Plays a role in control of the cell cycle, stress response, ribosome biogenesis and in those bacteria that undergo differentiation, in morphogenesis control. In Hahella chejuensis (strain KCTC 2396), this protein is GTPase Obg.